We begin with the raw amino-acid sequence, 210 residues long: 3-hexulose-6-phosphate synthase (210 aa).

This sequence belongs to the HPS/KGPDC family. HPS subfamily.

It carries out the reaction D-ribulose 5-phosphate + formaldehyde = D-arabino-hex-3-ulose 6-phosphate. Its pathway is one-carbon metabolism; formaldehyde assimilation via RuMP pathway; D-fructose 6-phosphate from D-ribulose 5-phosphate and formaldehyde: step 1/2. Functionally, catalyzes the condensation of ribulose 5-phosphate with formaldehyde to form 3-hexulose 6-phosphate. This chain is 3-hexulose-6-phosphate synthase, found in Staphylococcus aureus (strain bovine RF122 / ET3-1).